The following is a 251-amino-acid chain: 3-deoxy-manno-octulosonate cytidylyltransferase (251 aa).

Belongs to the KdsB family.

The protein resides in the cytoplasm. The enzyme catalyses 3-deoxy-alpha-D-manno-oct-2-ulosonate + CTP = CMP-3-deoxy-beta-D-manno-octulosonate + diphosphate. Its pathway is nucleotide-sugar biosynthesis; CMP-3-deoxy-D-manno-octulosonate biosynthesis; CMP-3-deoxy-D-manno-octulosonate from 3-deoxy-D-manno-octulosonate and CTP: step 1/1. It functions in the pathway bacterial outer membrane biogenesis; lipopolysaccharide biosynthesis. In terms of biological role, activates KDO (a required 8-carbon sugar) for incorporation into bacterial lipopolysaccharide in Gram-negative bacteria. This is 3-deoxy-manno-octulosonate cytidylyltransferase from Rhizobium etli (strain CIAT 652).